The following is a 257-amino-acid chain: Zinc transporter ZupT (257 aa).

3 helical membrane passes run 5–25, 32–52, and 61–81; these read LILT…GVLG, LLAF…LMEM, and GMSP…YFGL. Residues asparagine 120 and glutamate 123 each contribute to the Fe(2+) site. Zn(2+) contacts are provided by glutamate 123 and histidine 148. The next 4 helical transmembrane spans lie at 137–157, 171–191, 195–215, and 236–256; these read LGFG…LAVA, ILWA…AWLI, MISP…MVAL, and GVLC…TVGI. Fe(2+)-binding residues include asparagine 149, glutamate 152, and glutamate 181. Zn(2+) is bound at residue glutamate 152.

This sequence belongs to the ZIP transporter (TC 2.A.5) family. ZupT subfamily.

The protein localises to the cell inner membrane. It carries out the reaction Zn(2+)(in) = Zn(2+)(out). Mediates zinc uptake. May also transport other divalent cations. This chain is Zinc transporter ZupT, found in Escherichia coli O81 (strain ED1a).